The sequence spans 173 residues: Dual-action ribosomal maturation protein DarP (173 aa).

It belongs to the DarP family.

Its subcellular location is the cytoplasm. Functionally, member of a network of 50S ribosomal subunit biogenesis factors which assembles along the 30S-50S interface, preventing incorrect 23S rRNA structures from forming. Promotes peptidyl transferase center (PTC) maturation. The chain is Dual-action ribosomal maturation protein DarP from Pseudomonas fluorescens (strain ATCC BAA-477 / NRRL B-23932 / Pf-5).